The sequence spans 1410 residues: Ribosome-binding protein 1 (1410 aa).

The Lumenal portion of the chain corresponds to 1–7; that stretch reads MDIYDTQ. A helical transmembrane segment spans residues 8-28; that stretch reads TLGVVVFGGFMVVSAIGIFLV. At 29-1410 the chain is on the cytoplasmic side; that stretch reads STFSMKETSY…GSSSKEGTSV (1382 aa). Disordered regions lie at residues 44–90 and 129–152; these read NQRK…DPAP and QEKL…VEPA. Basic residues predominate over residues 52-63; sequence THHQKVEKKKKE. Positions 64–88 are enriched in basic and acidic residues; sequence KTVEKKGKTKKKEEKPNGKIPDHDP. A Glycyl lysine isopeptide (Lys-Gly) (interchain with G-Cter in SUMO2) cross-link involves residue K148. Phosphoserine occurs at positions 159 and 165. Disordered stretches follow at residues 173 to 648 and 895 to 925; these read APKE…PLYL and QSSH…LQSS. Composition is skewed to polar residues over residues 191-209 and 225-238; these read TPAT…QNQS and TPNQ…TPNQ. 33 repeat units span residues 197-206, 207-216, 217-226, 227-236, 237-246, 247-256, 257-266, 267-276, 277-286, 287-296, 297-306, 307-316, 317-326, 327-336, 337-346, 347-356, 357-366, 367-376, 377-386, 387-396, 397-406, 407-416, 417-426, 427-436, 437-446, 447-456, 457-466, 467-476, 477-486, 487-496, 497-506, 507-516, and 517-526. The 41 X 10 AA approximate tandem repeats of [TN]-Q-[GSA]-[KRQT]-K-[ATGSV]-[ED]-[GTAS]-[ATIS]-[PQTAS] stretch occupies residues 197–604; that stretch reads TQGKKAEGTQ…NQGKKTESAS (408 aa). A phosphothreonine mark is found at T225, T235, T245, and T255. Composition is skewed to polar residues over residues 265-278 and 295-519; these read AQNQ…TPNQ and AQNQ…QNQG. Residues 520-532 are compositionally biased toward basic and acidic residues; the sequence is KKTEGAQGKKAER. A 34; approximate repeat occupies 527–534; that stretch reads GKKAERSP. S533 is modified (phosphoserine). Residues 535-544 form repeat 35; the sequence is NQGKKGEGAP. Residues 545–554 form a 36; approximate repeat; the sequence is IQGKKADSVA. Positions 553-567 are enriched in polar residues; sequence VANQGTKVEGITNQG. 2 tandem repeats follow at residues 555-564 and 565-574. Residues 568-581 show a composition bias toward basic and acidic residues; sequence KKAEGSPSEGKKAE. Phosphoserine occurs at positions 573 and 583. The 39; approximate repeat unit spans residues 575–584; that stretch reads SEGKKAEGSP. A run of 2 repeats spans residues 585–594 and 595–604. Positions 602–612 are enriched in polar residues; sequence SASVQGRNTDV. The residue at position 615 (S615) is a Phosphoserine. A Glycyl lysine isopeptide (Lys-Gly) (interchain with G-Cter in SUMO1) cross-link involves residue K620. S900 bears the Phosphoserine mark. N6-acetyllysine is present on K932. Residues S959 and S978 each carry the phosphoserine modification. 4 disordered regions span residues 1093 to 1122, 1260 to 1287, 1330 to 1362, and 1378 to 1410; these read GPTL…ETQS, EMKS…EQDP, EKLR…LTSD, and QEQL…GTSV. Phosphoserine occurs at positions 1276 and 1277. 2 stretches are compositionally biased toward basic and acidic residues: residues 1347-1360 and 1381-1403; these read SQLK…KKLT and LARE…DGSS.

Its subcellular location is the endoplasmic reticulum membrane. In terms of biological role, acts as a ribosome receptor and mediates interaction between the ribosome and the endoplasmic reticulum membrane. This chain is Ribosome-binding protein 1 (RRBP1), found in Homo sapiens (Human).